We begin with the raw amino-acid sequence, 175 residues long: 3-hydroxydecanoyl-[acyl-carrier-protein] dehydratase (175 aa).

His74 is a catalytic residue.

This sequence belongs to the thioester dehydratase family. FabA subfamily. As to quaternary structure, homodimer.

It is found in the cytoplasm. It catalyses the reaction a (3R)-hydroxyacyl-[ACP] = a (2E)-enoyl-[ACP] + H2O. It carries out the reaction (3R)-hydroxydecanoyl-[ACP] = (2E)-decenoyl-[ACP] + H2O. The enzyme catalyses (2E)-decenoyl-[ACP] = (3Z)-decenoyl-[ACP]. Its pathway is lipid metabolism; fatty acid biosynthesis. Necessary for the introduction of cis unsaturation into fatty acids. Catalyzes the dehydration of (3R)-3-hydroxydecanoyl-ACP to E-(2)-decenoyl-ACP and then its isomerization to Z-(3)-decenoyl-ACP. Can catalyze the dehydratase reaction for beta-hydroxyacyl-ACPs with saturated chain lengths up to 16:0, being most active on intermediate chain length. In Alcanivorax borkumensis (strain ATCC 700651 / DSM 11573 / NCIMB 13689 / SK2), this protein is 3-hydroxydecanoyl-[acyl-carrier-protein] dehydratase.